A 342-amino-acid chain; its full sequence is Dihydroorotase (342 aa).

Zn(2+)-binding residues include H13 and H15. Substrate is bound by residues H15–R17 and N41. Zn(2+) contacts are provided by K98, H135, and H173. An N6-carboxylysine modification is found at K98. H135 lines the substrate pocket. Residue L218 participates in substrate binding. Residue D246 participates in Zn(2+) binding. D246 is an active-site residue. Residues H250 and A262 each contribute to the substrate site.

This sequence belongs to the metallo-dependent hydrolases superfamily. DHOase family. Class II DHOase subfamily. In terms of assembly, homodimer. Zn(2+) is required as a cofactor.

It catalyses the reaction (S)-dihydroorotate + H2O = N-carbamoyl-L-aspartate + H(+). It participates in pyrimidine metabolism; UMP biosynthesis via de novo pathway; (S)-dihydroorotate from bicarbonate: step 3/3. Functionally, catalyzes the reversible cyclization of carbamoyl aspartate to dihydroorotate. The protein is Dihydroorotase of Vibrio parahaemolyticus serotype O3:K6 (strain RIMD 2210633).